A 123-amino-acid polypeptide reads, in one-letter code: Small ribosomal subunit protein uS13 (123 aa).

A compositionally biased stretch (basic residues) spans 99-113; sequence RGQRTHTNARTRKGG. The tract at residues 99–123 is disordered; it reads RGQRTHTNARTRKGGSRLAVAAKKK.

This sequence belongs to the universal ribosomal protein uS13 family. Part of the 30S ribosomal subunit. Forms a loose heterodimer with protein S19. Forms two bridges to the 50S subunit in the 70S ribosome.

Its function is as follows. Located at the top of the head of the 30S subunit, it contacts several helices of the 16S rRNA. In the 70S ribosome it contacts the 23S rRNA (bridge B1a) and protein L5 of the 50S subunit (bridge B1b), connecting the 2 subunits; these bridges are implicated in subunit movement. Contacts the tRNAs in the A and P-sites. In Anaplasma phagocytophilum (strain HZ), this protein is Small ribosomal subunit protein uS13.